Reading from the N-terminus, the 324-residue chain is Signal peptidase I (324 aa).

Residue methionine 1 is modified to Blocked amino end (Met). The Periplasmic portion of the chain corresponds to 1–3 (MAN). The chain crosses the membrane as a helical span at residues 4–22 (MFALILVIATLVTGILWCV). At 23 to 58 (DKFFFAPKRRERQAAAQAAAGDSLDKATLKKVAPKP) the chain is on the cytoplasmic side. A helical transmembrane segment spans residues 59-77 (GWLETGASVFPVLAIVLIV). Over 78–324 (RSFIYEPFQI…LRLSRIGGIH (247 aa)) the chain is Periplasmic. Residues serine 91 and lysine 146 contribute to the active site. A disulfide bond links cysteine 171 and cysteine 177.

Belongs to the peptidase S26 family.

Its subcellular location is the cell inner membrane. The catalysed reaction is Cleavage of hydrophobic, N-terminal signal or leader sequences from secreted and periplasmic proteins.. The chain is Signal peptidase I (lepB) from Escherichia coli (strain K12).